We begin with the raw amino-acid sequence, 147 residues long: NAD(P)H-quinone oxidoreductase subunit N (147 aa).

The protein belongs to the complex I NdhN subunit family. NDH-1 can be composed of about 15 different subunits; different subcomplexes with different compositions have been identified which probably have different functions.

Its subcellular location is the cellular thylakoid membrane. It carries out the reaction a plastoquinone + NADH + (n+1) H(+)(in) = a plastoquinol + NAD(+) + n H(+)(out). The catalysed reaction is a plastoquinone + NADPH + (n+1) H(+)(in) = a plastoquinol + NADP(+) + n H(+)(out). Functionally, NDH-1 shuttles electrons from an unknown electron donor, via FMN and iron-sulfur (Fe-S) centers, to quinones in the respiratory and/or the photosynthetic chain. The immediate electron acceptor for the enzyme in this species is believed to be plastoquinone. Couples the redox reaction to proton translocation, and thus conserves the redox energy in a proton gradient. Cyanobacterial NDH-1 also plays a role in inorganic carbon-concentration. The polypeptide is NAD(P)H-quinone oxidoreductase subunit N (Synechococcus sp. (strain JA-2-3B'a(2-13)) (Cyanobacteria bacterium Yellowstone B-Prime)).